The chain runs to 847 residues: MAAEARVIDYMKGLPQSYQHRETYFEQFLEQNSERLVEEIDGPVVEKGLISDGEKEIIRHLNVQDKFTINGFRKSVKICHMVSLGATRQTKRTGTTELDFMGAGPWTLYPSSARALYSSKESTVHLVDEAQRRMIMSKCPTMAGPTSTGTYMAAIHERLSTPSDLRHLFTKMVLYLYDYTLAVVSKDNTMHTADDISFDLRPHLPSDALLATVINHDMVIDGDLFTPEQISLLCLAGQQYPSVWYAGEGNIYNSCNMVADDLVVVSSGRLTTDSAFTWGSPDKLYNMMWTIAQKLNGVSCLMYALESMRGKCKMMSDIVAKTDCREVNAMIPRSYCMSTAFGQIREKQIVVKMPGYFSTSIGMLSDLMYGMTFKAVASCVAETLGAMGTIVSSSTPRTNPTINGLMRDYGLQHTNAWDNFMLRNFEMVTRRPTQWDIGQHMKEYALALAEHVMLGYDIEMPSILLTIPALTAVNTAYGLTRGWYGGGSTLDMDKKQRKESTDALCAVGWMCGLRQCRPQVFRNRAGKKQVMVNAAERKLRAEAGDDCRIRDVEFWLEDTPGGRVDENEESAPNLYKTEFSGTKCAMVFNYEMGMWIEARQMDYDRLKRETFSGDLTKKERYTMSKVSAMPIHWGPPPNHKAKLEASLEHMKSISRGNAIVPTREPKHVRINSQSMAVVPKYVKDGVEEEKYVHYERPAIEEGDTIRFSEIDVPGDGSCGIHAMVKDLTVHGRLSPHEAAKATELFSTDTASKKFHDAAELAAQCQLWGMGMDLIDKGSNRVTRYGPEDSEYSITIIRDGGHFRAGLIGEGANEMTVEHLEQQTRAPEEFVRDVKSLGSLFGGSPILQ.

This is an uncharacterized protein from Penicillium chrysogenum virus (isolate Caston/2003) (PcV).